Here is a 366-residue protein sequence, read N- to C-terminus: 3-beta-hydroxysteroid dehydrogenase (366 aa).

Tyr154 functions as the Proton donor in the catalytic mechanism.

This sequence belongs to the 3-beta-HSD family.

It carries out the reaction testosterone + NAD(+) = androst-4-ene-3,17-dione + NADH + H(+). The enzyme catalyses testosterone + NADP(+) = androst-4-ene-3,17-dione + NADPH + H(+). Catalyzes the degradation of testosterone into androstenedione. In Mycolicibacterium neoaurum (Mycobacterium neoaurum), this protein is 3-beta-hydroxysteroid dehydrogenase.